A 138-amino-acid polypeptide reads, in one-letter code: Large-conductance mechanosensitive channel (138 aa).

A run of 3 helical transmembrane segments spans residues 15–35 (VDLA…NSIV), 38–58 (IIMP…MFIQ), and 80–100 (GNFI…FLVV).

The protein belongs to the MscL family. As to quaternary structure, homopentamer.

The protein localises to the cell inner membrane. Functionally, channel that opens in response to stretch forces in the membrane lipid bilayer. May participate in the regulation of osmotic pressure changes within the cell. This is Large-conductance mechanosensitive channel from Brucella ovis (strain ATCC 25840 / 63/290 / NCTC 10512).